Consider the following 297-residue polypeptide: Protease HtpX homolog (297 aa).

The next 2 helical transmembrane spans lie at 5-25 and 44-64; these read IFLF…VLSI and IVAL…MSLL. A Zn(2+)-binding site is contributed by His155. Residue Glu156 is part of the active site. His159 is a binding site for Zn(2+). Helical transmembrane passes span 170–190 and 204–224; these read LLQG…AWAV and FIAV…VVFA. Glu230 serves as a coordination point for Zn(2+).

The protein belongs to the peptidase M48B family. The cofactor is Zn(2+).

Its subcellular location is the cell membrane. The polypeptide is Protease HtpX homolog (Bacillus licheniformis (strain ATCC 14580 / DSM 13 / JCM 2505 / CCUG 7422 / NBRC 12200 / NCIMB 9375 / NCTC 10341 / NRRL NRS-1264 / Gibson 46)).